A 1341-amino-acid chain; its full sequence is uncharacterized protein (1341 aa).

A DNA-binding region (zn(2)-C6 fungal-type) is located at residues 41–68; sequence CLLCRRRKQRCDHKLPSCTACLKAGIKC. Composition is skewed to low complexity over residues 72–93, 779–791, 864–906, 920–967, and 1036–1050; these read SKYS…AGTV, SNSA…SNSN, SNSS…NDNN, NHNN…GNNS, and SPSK…SSHS. Disordered regions lie at residues 72–100, 770–804, 864–971, and 1031–1116; these read SKYS…PHPV, ISSG…MPPA, SNSS…QYVR, and TMTN…NSNP. Positions 1057–1076 are enriched in polar residues; the sequence is MTQSPTPYPQTSNMLPQQHV. Over residues 1078-1090 the composition is skewed to low complexity; the sequence is RPLPQQQREQPQQ. Positions 1091–1116 are enriched in polar residues; it reads HITSPQRFSESNFTNQLNNGMINSNP. At Ser-1143 the chain carries Phosphoserine. The segment covering 1220 to 1230 has biased composition (polar residues); the sequence is SQEPSSLSMDK. The segment at 1220–1240 is disordered; that stretch reads SQEPSSLSMDKQQQQHQQQNM.

Its subcellular location is the nucleus. This is an uncharacterized protein from Saccharomyces cerevisiae (strain ATCC 204508 / S288c) (Baker's yeast).